Reading from the N-terminus, the 431-residue chain is Histidinol dehydrogenase 1 (431 aa).

NAD(+) contacts are provided by Tyr127, Gln188, and Asn211. 3 residues coordinate substrate: Ser234, Gln256, and His259. Residues Gln256 and His259 each contribute to the Zn(2+) site. Active-site proton acceptor residues include Glu324 and His325. Positions 325, 358, 412, and 417 each coordinate substrate. Asp358 serves as a coordination point for Zn(2+). His417 serves as a coordination point for Zn(2+).

It belongs to the histidinol dehydrogenase family. It depends on Zn(2+) as a cofactor.

It catalyses the reaction L-histidinol + 2 NAD(+) + H2O = L-histidine + 2 NADH + 3 H(+). Its pathway is amino-acid biosynthesis; L-histidine biosynthesis; L-histidine from 5-phospho-alpha-D-ribose 1-diphosphate: step 9/9. Functionally, catalyzes the sequential NAD-dependent oxidations of L-histidinol to L-histidinaldehyde and then to L-histidine. In Nostoc sp. (strain PCC 7120 / SAG 25.82 / UTEX 2576), this protein is Histidinol dehydrogenase 1 (hisD1).